Here is a 243-residue protein sequence, read N- to C-terminus: tRNA pseudouridine synthase A (243 aa).

D53 acts as the Nucleophile in catalysis. Y111 provides a ligand contact to substrate.

The protein belongs to the tRNA pseudouridine synthase TruA family. Homodimer.

The catalysed reaction is uridine(38/39/40) in tRNA = pseudouridine(38/39/40) in tRNA. In terms of biological role, formation of pseudouridine at positions 38, 39 and 40 in the anticodon stem and loop of transfer RNAs. The chain is tRNA pseudouridine synthase A from Pelodictyon phaeoclathratiforme (strain DSM 5477 / BU-1).